Here is a 135-residue protein sequence, read N- to C-terminus: Galectin-1 (135 aa).

Position 2 is an N-acetylalanine (Ala2). One can recognise a Galectin domain in the interval 4-135 (GLVASNLNLK…DFKIKCVAFD (132 aa)). Lys13 and Lys29 each carry N6-acetyllysine. Residue Ser30 is modified to Phosphoserine; by FAM20C. A beta-D-galactoside-binding positions include 45 to 49 (HFNPR), His53, Asn62, and 69 to 72 (WGTE). At Lys108 the chain carries N6-acetyllysine; alternate. At Lys108 the chain carries N6-succinyllysine; alternate. Lys128 carries the post-translational modification N6-acetyllysine.

Homodimer. Binds LGALS3BP. Interacts with CD2, CD3, CD4, CD6, CD7, CD43, ALCAM and CD45. Interacts with laminin (via poly-N-acetyllactosamine). Interacts with SUSD2. Interacts with cargo receptor TMED10; the interaction mediates the translocation from the cytoplasm into the ERGIC (endoplasmic reticulum-Golgi intermediate compartment) and thereby secretion. Interacts with CD69. Expressed in placenta, maternal decidua and fetal membranes. Within placenta, expressed in trophoblasts, stromal cells, villous endothelium, syncytiotrophoblast apical membrane and villous stroma. Within fetal membranes, expressed in amnion, chorioamniotic mesenchyma and chorion (at protein level). Expressed in cardiac, smooth, and skeletal muscle, neurons, thymus, kidney and hematopoietic cells.

It is found in the secreted. The protein resides in the extracellular space. It localises to the extracellular matrix. The protein localises to the cytoplasm. In terms of biological role, lectin that binds beta-galactoside and a wide array of complex carbohydrates. Plays a role in regulating apoptosis, cell proliferation and cell differentiation. Inhibits CD45 protein phosphatase activity and therefore the dephosphorylation of Lyn kinase. Strong inducer of T-cell apoptosis. Plays a negative role in Th17 cell differentiation via activation of the receptor CD69. This chain is Galectin-1, found in Homo sapiens (Human).